The sequence spans 141 residues: Putative phosphatidylglycerol/phosphatidylinositol transfer protein DDB_G0278295 (141 aa).

The N-terminal stretch at 1 to 19 is a signal peptide; it reads MRLLLALFFVLALVSPSFT. Residues Asn-82 and Asn-104 are each glycosylated (N-linked (GlcNAc...) asparagine).

This sequence belongs to the NPC2 family. As to quaternary structure, monomer.

In terms of biological role, catalyzes the intermembrane transfer of phosphatidylglycerol and phosphatidylinositol. The polypeptide is Putative phosphatidylglycerol/phosphatidylinositol transfer protein DDB_G0278295 (Dictyostelium discoideum (Social amoeba)).